The sequence spans 114 residues: Snake venom vascular endothelial growth factor (114 aa).

Glutamine 1 carries the pyrrolidone carboxylic acid modification. 3 disulfides stabilise this stretch: cysteine 14–cysteine 56, cysteine 45–cysteine 91, and cysteine 49–cysteine 93. The interval 92 to 114 (ECRPGSTVNNGKRKKNPKEGEPR) is disordered.

It belongs to the PDGF/VEGF growth factor family. Snake venom VEGF subfamily. As to quaternary structure, homodimer; disulfide-linked. Interacts with human VEGF receptor 1/FLT1. Interacts with human VEGF receptor 2/KDR. Expressed by venom gland.

The protein localises to the secreted. Its function is as follows. Snake venom vascular endothelial growth factor (svVEGF) that may contribute to venom dispersion and prey subjugation by inducing vascular permeability and hypotension. Induces an increase in capillary permeability after intradermal injection, as well as a drastic hypotensive effect after intravenous injection. The hypotension is mediated by nitric oxide (NO), which is produced by VEGF-activated endothelium NO synthase. Induces angiogenesis and migration of human vascular endothelial cells in vitro. Exhibits angiogenic activity by inducing human umbilical vein endothelial cells (HUVEC) to develop vessels in vitro. Induces cellular migration of HUVEC cells towards a wound in scratch assays, enhancing wound closure after 12 h by 49.5%. Induces dose-dependent leukocyte recruitment to the peritoneal cavity leading to increased vascular permeability in mice. In Crotalus durissus terrificus (South American rattlesnake), this protein is Snake venom vascular endothelial growth factor.